The chain runs to 126 residues: UPF0102 protein P9303_16141 (126 aa).

This sequence belongs to the UPF0102 family.

The chain is UPF0102 protein P9303_16141 from Prochlorococcus marinus (strain MIT 9303).